A 241-amino-acid chain; its full sequence is Superoxide dismutase [Mn] 2, mitochondrial (241 aa).

Residues histidine 60, histidine 108, aspartate 197, and histidine 201 each contribute to the Mn(2+) site.

Belongs to the iron/manganese superoxide dismutase family. Homotetramer. Mn(2+) is required as a cofactor.

The protein resides in the mitochondrion matrix. It catalyses the reaction 2 superoxide + 2 H(+) = H2O2 + O2. In terms of biological role, destroys superoxide anion radicals which are normally produced within the cells and which are toxic to biological systems. This Arabidopsis thaliana (Mouse-ear cress) protein is Superoxide dismutase [Mn] 2, mitochondrial (MSD2).